A 160-amino-acid polypeptide reads, in one-letter code: Cytochrome b6-f complex subunit 4 (160 aa).

3 helical membrane-spanning segments follow: residues 36–56, 95–115, and 131–151; these read LLYI…GLAV, LLGV…PFLE, and TVFL…ALPI.

It belongs to the cytochrome b family. PetD subfamily. As to quaternary structure, the 4 large subunits of the cytochrome b6-f complex are cytochrome b6, subunit IV (17 kDa polypeptide, petD), cytochrome f and the Rieske protein, while the 4 small subunits are petG, petL, petM and petN. The complex functions as a dimer.

The protein localises to the plastid. The protein resides in the chloroplast thylakoid membrane. Component of the cytochrome b6-f complex, which mediates electron transfer between photosystem II (PSII) and photosystem I (PSI), cyclic electron flow around PSI, and state transitions. The protein is Cytochrome b6-f complex subunit 4 of Marchantia polymorpha (Common liverwort).